A 400-amino-acid polypeptide reads, in one-letter code: S-adenosylmethionine sensor upstream of mTORC1 (400 aa).

6 residues coordinate S-adenosyl-L-methionine: R99, G168, D186, D198, F199, and S240.

Belongs to the BMT2/SAMTOR family. As to quaternary structure, interacts with the GATOR1 complex; interaction is disrupted when samtor binds S-adenosyl-L-methionine. Interacts with the KICSTOR complex; interaction is disrupted when samtor binds S-adenosyl-L-methionine.

In terms of biological role, S-adenosyl-L-methionine-binding protein that acts as an inhibitor of mTORC1 signaling via interaction with the GATOR1 and KICSTOR complexes. Acts as a sensor of S-adenosyl-L-methionine to signal methionine sufficiency to mTORC1: in presence of methionine, binds S-adenosyl-L-methionine, leading to disrupt interaction with the GATOR1 and KICSTOR complexes and promote mTORC1 signaling. Upon methionine starvation, S-adenosyl-L-methionine levels are reduced, thereby promoting the association with GATOR1 and KICSTOR, leading to inhibit mTORC1 signaling. Probably also acts as a S-adenosyl-L-methionine-dependent methyltransferase. The protein is S-adenosylmethionine sensor upstream of mTORC1 of Xenopus tropicalis (Western clawed frog).